The chain runs to 897 residues: Alanine--tRNA ligase (897 aa).

Residues H581, H585, C684, and H688 each coordinate Zn(2+).

It belongs to the class-II aminoacyl-tRNA synthetase family. The cofactor is Zn(2+).

It localises to the cytoplasm. It catalyses the reaction tRNA(Ala) + L-alanine + ATP = L-alanyl-tRNA(Ala) + AMP + diphosphate. Catalyzes the attachment of alanine to tRNA(Ala) in a two-step reaction: alanine is first activated by ATP to form Ala-AMP and then transferred to the acceptor end of tRNA(Ala). Also edits incorrectly charged Ser-tRNA(Ala) and Gly-tRNA(Ala) via its editing domain. This Mycobacterium sp. (strain JLS) protein is Alanine--tRNA ligase.